We begin with the raw amino-acid sequence, 811 residues long: Probable inorganic carbon transporter subunit DabA (811 aa).

Zn(2+)-binding residues include Cys336, Asp338, His498, and Cys513.

This sequence belongs to the inorganic carbon transporter (TC 9.A.2) DabA family. In terms of assembly, forms a complex with DabB. It depends on Zn(2+) as a cofactor.

The protein resides in the cell inner membrane. Part of an energy-coupled inorganic carbon pump. This is Probable inorganic carbon transporter subunit DabA from Azorhizobium caulinodans (strain ATCC 43989 / DSM 5975 / JCM 20966 / LMG 6465 / NBRC 14845 / NCIMB 13405 / ORS 571).